The chain runs to 133 residues: Profilin (133 aa).

It belongs to the profilin family.

In terms of biological role, more likely to influence phosphoinositide metabolism than actin assembly. The protein is Profilin of Vaccinia virus (strain Tian Tan) (VACV).